A 1312-amino-acid chain; its full sequence is Retinoblastoma-like protein A (1312 aa).

7 disordered regions span residues 1–67 (MMAH…NNEN), 168–231 (SSSS…KNSS), 336–359 (HNYN…NNNN), 536–611 (NNNN…IYGT), 987–1023 (NNNN…NNNN), 1168–1236 (KKND…NNTE), and 1249–1312 (EESP…RLKS). The segment covering 10–67 (TNINTKTTAPTTTTTEQQPEQQQQQPEQQQQEKQNNNNNNNNNNNNNNNINNNENNEN) has biased composition (low complexity). Residues 36–117 (EQQQQEKQNN…TSSALNVDQD (82 aa)) adopt a coiled-coil conformation. Over residues 168 to 179 (SSSSFQPDNNSK) the composition is skewed to polar residues. Residues 180 to 189 (IKGRKIRKTN) show a composition bias toward basic residues. Residues 195 to 230 (NNDSNEEEEETTTDTEEEEEEDTLLNENNNSINKNS) are a coiled coil. Acidic residues predominate over residues 198–218 (SNEEEEETTTDTEEEEEEDTL). 3 stretches are compositionally biased toward low complexity: residues 219–231 (LNEN…KNSS), 337–359 (NYNN…NNNN), and 536–595 (NNNN…SSSS). Low complexity-rich tracts occupy residues 1185 to 1234 (NNNN…NNNN), 1251 to 1275 (SPST…NNNK), and 1286 to 1305 (SPSS…SSSG).

The protein belongs to the retinoblastoma protein (RB) family.

The protein resides in the nucleus. Its function is as follows. Key regulator of entry into cell division. Directly involved in heterochromatin formation by maintaining overall chromatin structure and, in particular, that of constitutive heterochromatin by stabilizing histone methylation. Controls histone H4 'Lys-20' trimethylation. Probably acts as a transcription repressor by recruiting chromatin-modifying enzymes to promoters. Plays a dual role, regulating cell-cycle progression and transcriptional events leading to terminal differentiation. In the absence of a G1 phase, functions in late G2 controlling the expression of both S-phase and mitotic genes. Controls stalk/spore preference by suppressing the DIF response in cells destined for the spore pathway. DIF is a chlorinated hydroxyphenone made by cells of spore pathway that promotes stalk differentiation. This is Retinoblastoma-like protein A from Dictyostelium discoideum (Social amoeba).